The chain runs to 42 residues: Potassium channel gamma toxin gamma-KTx 1.9 (42 aa).

4 cysteine pairs are disulfide-bonded: C5/C23, C11/C34, C20/C39, and C24/C41.

The protein belongs to the ergtoxin family. Gamma-KTx 1 subfamily. In terms of tissue distribution, expressed by the venom gland.

The protein resides in the secreted. Its function is as follows. Blocks human voltage-gated potassium channel Kv11.1/KCNH2/ERG1 (IC(50)=16.9 nM). The chain is Potassium channel gamma toxin gamma-KTx 1.9 from Centruroides tecomanus (Scorpion).